A 107-amino-acid chain; its full sequence is MMKGGLAGLMKQAQQMQEKMKTAQAELAALEVNGQAAGGLVKVAISGKYELKRVQIDPGAMDDREMLEDLIVTAYTEAFKQVEAASTQLMSGATAGMPMPPGFKLPF.

The protein belongs to the YbaB/EbfC family. As to quaternary structure, homodimer.

It is found in the cytoplasm. The protein resides in the nucleoid. Binds to DNA and alters its conformation. May be involved in regulation of gene expression, nucleoid organization and DNA protection. This Polynucleobacter asymbioticus (strain DSM 18221 / CIP 109841 / QLW-P1DMWA-1) (Polynucleobacter necessarius subsp. asymbioticus) protein is Nucleoid-associated protein Pnuc_0701.